Here is a 35-residue protein sequence, read N- to C-terminus: Natriuretic peptide TNPa (35 aa).

An intrachain disulfide couples cysteine 9 to cysteine 25.

In terms of tissue distribution, expressed by the venom gland.

It is found in the secreted. In terms of biological role, snake venom natriuretic peptide that exhibits vasoactive and probable hypotensive activity. Is only weakly active on natriuretic peptide receptor-C (NPR3). Stimulates cGMP production through the natriuretic peptide receptor 1 (NPR1) with moderate potencies for the rat NPR1 (EC(50)=2020 nM), and very weak potencies over human NPR1 (15% activation at 10 uM). In vivo, does not impact systolic and diastolic blood pressure, as well as heart rate, when intravenously injected in conscious rabbits. Does not affect the bradycardia due to cardiac afferent stimulation (Bezold-Jarisch reflex). This Oxyuranus microlepidotus (Inland taipan) protein is Natriuretic peptide TNPa.